A 245-amino-acid polypeptide reads, in one-letter code: Eukaryotic translation initiation factor 6 (245 aa).

It belongs to the eIF-6 family. In terms of assembly, monomer. Associates with the 60S ribosomal subunit.

The protein resides in the cytoplasm. It is found in the nucleus. The protein localises to the nucleolus. Binds to the 60S ribosomal subunit and prevents its association with the 40S ribosomal subunit to form the 80S initiation complex in the cytoplasm. May also be involved in ribosome biogenesis. The polypeptide is Eukaryotic translation initiation factor 6 (Tetrahymena thermophila (strain SB210)).